A 154-amino-acid polypeptide reads, in one-letter code: Large ribosomal subunit protein uL24 (154 aa).

Residues 97–154 form a disordered region; that stretch reads EIAARKNLPPPEVPEETSNDTKESDENVTGADKEETNEIKEEDLNDNEDKNNDGSQEA. A compositionally biased stretch (basic and acidic residues) spans 115 to 135; it reads NDTKESDENVTGADKEETNEI.

Belongs to the universal ribosomal protein uL24 family. As to quaternary structure, part of the 50S ribosomal subunit.

Functionally, one of two assembly initiator proteins, it binds directly to the 5'-end of the 23S rRNA, where it nucleates assembly of the 50S subunit. Located at the polypeptide exit tunnel on the outside of the subunit. The sequence is that of Large ribosomal subunit protein uL24 from Picrophilus torridus (strain ATCC 700027 / DSM 9790 / JCM 10055 / NBRC 100828 / KAW 2/3).